We begin with the raw amino-acid sequence, 843 residues long: Ribosome biogenesis protein ERB1 (843 aa).

2 disordered regions span residues lysine 36–tyrosine 189 and alanine 364–leucine 419. Composition is skewed to acidic residues over residues valine 77–glutamate 92, serine 106–serine 139, and glutamate 163–glutamate 172. Over residues proline 173 to glycine 183 the composition is skewed to basic and acidic residues. Residues proline 379–tyrosine 396 are compositionally biased toward pro residues. Residues leucine 397 to tryptophan 406 are compositionally biased toward basic and acidic residues. 6 WD repeats span residues glycine 487–serine 526, serine 530–glutamate 570, lysine 668–isoleucine 706, proline 709–lysine 754, tyrosine 758–serine 797, and threonine 813–methionine 843.

This sequence belongs to the WD repeat BOP1/ERB1 family. As to quaternary structure, component of the NOP7 complex, composed of ERB1, NOP7 and YTM1. The complex is held together by ERB1, which interacts with NOP7 via its N-terminal domain and with YTM1 via a high-affinity interaction between the seven-bladed beta-propeller domains of the 2 proteins. The NOP7 complex associates with the 66S pre-ribosome.

It is found in the nucleus. Its subcellular location is the nucleolus. It localises to the nucleoplasm. In terms of biological role, component of the NOP7 complex, which is required for maturation of the 25S and 5.8S ribosomal RNAs and formation of the 60S ribosome. The polypeptide is Ribosome biogenesis protein ERB1 (Coccidioides immitis (strain RS) (Valley fever fungus)).